A 447-amino-acid polypeptide reads, in one-letter code: Phosphoglucosamine mutase (447 aa).

Residue Ser-102 is the Phosphoserine intermediate of the active site. 4 residues coordinate Mg(2+): Ser-102, Asp-241, Asp-243, and Asp-245. Phosphoserine is present on Ser-102.

This sequence belongs to the phosphohexose mutase family. Requires Mg(2+) as cofactor. Activated by phosphorylation.

The catalysed reaction is alpha-D-glucosamine 1-phosphate = D-glucosamine 6-phosphate. In terms of biological role, catalyzes the conversion of glucosamine-6-phosphate to glucosamine-1-phosphate. This Methylococcus capsulatus (strain ATCC 33009 / NCIMB 11132 / Bath) protein is Phosphoglucosamine mutase.